A 326-amino-acid polypeptide reads, in one-letter code: Putative F-box protein At3g22710 (326 aa).

Residues 1–50 (MTMPDLPPDLVEEILSRVPATSVKKLRSTCTQWNAIFKDERFTEKHFSKA) form the F-box domain.

This chain is Putative F-box protein At3g22710, found in Arabidopsis thaliana (Mouse-ear cress).